A 589-amino-acid polypeptide reads, in one-letter code: F-box only protein 24 (589 aa).

The F-box domain maps to 23-69; the sequence is PISVQLFPPELVEHIVSFLPVKDLVALGQTCHYFHEVCDAEGVWRRI. The stretch at 386 to 435 is one RCC1 repeat; the sequence is GRIFMQGNNRYGQLGTGDKMDRGEPTQVHYLQRPIALWCGLNHSLVLSQT. The segment at 506 to 526 is disordered; that stretch reads VGGSPEPSQGAGAPQDPGGTA.

Directly interacts with SKP1 and CUL1.

Its function is as follows. Substrate-recognition component of the SCF (SKP1-CUL1-F-box protein)-type E3 ubiquitin ligase complex. The polypeptide is F-box only protein 24 (Fbxo24) (Mus musculus (Mouse)).